The following is a 409-amino-acid chain: MARAKFERTKPHVNIGTIGHVDHGKTTLTAAITMSLAALGQAKARKYDDIDAAPEERERGITINTAHVEYETQDRHYAHVDCPGHADYVKNMITGAAQMDGAVLVVSAADGPMPQTREHILLAKQVGVPNIVVFMNKQDQVDDEELLELVELEVRELLNDYDFPGDDIPIVSGSALMALEALNGADSMKKGDNEWVDKIYKLMEEVDAYIPTPERDVDKPFLMAVEDVFSITGRGTVATGRIERGKVVVGETVELVGIRDTRSTTVTGVEMFQKTLDEGMAGDNVGLLLRGVQKEDIERGMVLAKPGSITPHTQFESEVYILKKDEGGRHTPFFPGYRPQFYVRTTDVTGTISAFTADDGSAAEMVMPGDRIKMTVELINPIAIEQGMRFAIREGGRTVGAGVVSKILK.

One can recognise a tr-type G domain in the interval 10 to 214 (KPHVNIGTIG…EVDAYIPTPE (205 aa)). The tract at residues 19 to 26 (GHVDHGKT) is G1. 19–26 (GHVDHGKT) lines the GTP pocket. A Mg(2+)-binding site is contributed by threonine 26. Residues 60-64 (GITIN) form a G2 region. The tract at residues 81–84 (DCPG) is G3. GTP contacts are provided by residues 81–85 (DCPGH) and 136–139 (NKQD). Residues 136 to 139 (NKQD) form a G4 region. Residues 174-176 (SAL) are G5.

The protein belongs to the TRAFAC class translation factor GTPase superfamily. Classic translation factor GTPase family. EF-Tu/EF-1A subfamily. Monomer.

Its subcellular location is the cytoplasm. It carries out the reaction GTP + H2O = GDP + phosphate + H(+). Its function is as follows. GTP hydrolase that promotes the GTP-dependent binding of aminoacyl-tRNA to the A-site of ribosomes during protein biosynthesis. The chain is Elongation factor Tu from Acaryochloris marina (strain MBIC 11017).